The following is a 400-amino-acid chain: Deoxyguanosinetriphosphate triphosphohydrolase-like protein (400 aa).

One can recognise an HD domain in the interval 73–215 (RLTHSIEVSQ…AAIADDIAYN (143 aa)).

Belongs to the dGTPase family. Type 2 subfamily.

This chain is Deoxyguanosinetriphosphate triphosphohydrolase-like protein, found in Bartonella quintana (strain Toulouse) (Rochalimaea quintana).